The chain runs to 414 residues: Transcription factor FAMA (414 aa).

2 disordered regions span residues 1-61 (MDKD…TPFD) and 142-197 (KEDQ…SQRM). Composition is skewed to low complexity over residues 12 to 24 (GESSGGNDDNSSG) and 35 to 49 (QQQQKQSMPQQQQHQ). Over residues 166 to 175 (RENKNVTKKE) the composition is skewed to basic and acidic residues. The span at 176 to 185 (VKSKRKRART) shows a compositional bias: basic residues. The span at 187-197 (KTSEEVESQRM) shows a compositional bias: basic and acidic residues. In terms of domain architecture, bHLH spans 194–245 (SQRMTHIAVERNRRKQMNEHLRVLRSLMPGSYVQRGDQASIIGGAIEFVREL). A LxCxE motif motif is present at residues 249–253 (LQCLE).

As to quaternary structure, interacts with FAMA through its LxCxE motif. Self-interacts. Also interacts with bHLH071 and bHLH093. Interacts with RBR1. As to expression, resctricted to stomatal cell lineages (at protein level). Expressed in roots, leaves, stems, and flowers.

The protein localises to the nucleus. Transcription activator. Together with MYB88 and MYB124, ensures that stomata contain just two guard cells (GCs) by enforcing a single symmetric precursor cell division before stomatal maturity. Together with SPCH and MUTE, regulates the stomata formation. Required to promote differentiation and morphogenesis of stomatal guard cells and to halt proliferative divisions in their immediate precursors. Mediates the formation of stomata. Prevents histone H3K27me3 marks and derepresses stem cell gene expression. The chain is Transcription factor FAMA (FAMA) from Arabidopsis thaliana (Mouse-ear cress).